Here is a 406-residue protein sequence, read N- to C-terminus: Endoplasmic reticulum resident protein 44 (406 aa).

The N-terminal stretch at Met-1–Thr-29 is a signal peptide. The Thioredoxin domain maps to Glu-30–Gln-138. 2 disulfides stabilise this stretch: Cys-189-Cys-241 and Cys-301-Cys-318. An interaction with ITPR1 region spans residues Trp-236–Arg-285. Positions Phe-360 to Phe-387 are disordered. Positions Asp-377–Phe-387 are enriched in polar residues. The Prevents secretion from ER signature appears at Arg-403–Leu-406.

In terms of assembly, forms mixed disulfides with both ERO1A and ERO1B and cargo folding intermediates; the interactions with ERO1A and ERO1B result in their retention in the endoplasmic reticulum. Directly interacts with ITPR1 in a pH-, redox state- and calcium-dependent manner, but not with ITPR2 or ITPR3. The strength of this interaction inversely correlates with calcium concentration.

The protein resides in the endoplasmic reticulum lumen. Its function is as follows. Mediates thiol-dependent retention in the early secretory pathway, forming mixed disulfides with substrate proteins through its conserved CRFS motif. Inhibits the calcium channel activity of ITPR1. May have a role in the control of oxidative protein folding in the endoplasmic reticulum. Required to retain ERO1A and ERO1B in the endoplasmic reticulum. The protein is Endoplasmic reticulum resident protein 44 (ERP44) of Homo sapiens (Human).